Here is a 503-residue protein sequence, read N- to C-terminus: Probable cytosol aminopeptidase (503 aa).

Lysine 271 and aspartate 276 together coordinate Mn(2+). Lysine 283 is a catalytic residue. Aspartate 294, aspartate 353, and glutamate 355 together coordinate Mn(2+). Arginine 357 is an active-site residue.

The protein belongs to the peptidase M17 family. It depends on Mn(2+) as a cofactor.

The protein resides in the cytoplasm. It carries out the reaction Release of an N-terminal amino acid, Xaa-|-Yaa-, in which Xaa is preferably Leu, but may be other amino acids including Pro although not Arg or Lys, and Yaa may be Pro. Amino acid amides and methyl esters are also readily hydrolyzed, but rates on arylamides are exceedingly low.. It catalyses the reaction Release of an N-terminal amino acid, preferentially leucine, but not glutamic or aspartic acids.. Its function is as follows. Presumably involved in the processing and regular turnover of intracellular proteins. Catalyzes the removal of unsubstituted N-terminal amino acids from various peptides. The polypeptide is Probable cytosol aminopeptidase (Chlorobaculum parvum (strain DSM 263 / NCIMB 8327) (Chlorobium vibrioforme subsp. thiosulfatophilum)).